The chain runs to 278 residues: Probable endonuclease 4 (278 aa).

Zn(2+) contacts are provided by H70, H108, E143, D176, H179, H210, D223, H225, and E255.

The protein belongs to the AP endonuclease 2 family. The cofactor is Zn(2+).

The catalysed reaction is Endonucleolytic cleavage to 5'-phosphooligonucleotide end-products.. Endonuclease IV plays a role in DNA repair. It cleaves phosphodiester bonds at apurinic or apyrimidinic (AP) sites, generating a 3'-hydroxyl group and a 5'-terminal sugar phosphate. The polypeptide is Probable endonuclease 4 (Mycoplasmopsis agalactiae (strain NCTC 10123 / CIP 59.7 / PG2) (Mycoplasma agalactiae)).